Consider the following 327-residue polypeptide: Spermidine/putrescine import ATP-binding protein PotA (327 aa).

The ABC transporter domain occupies 5 to 235 (IKVEAVEKHF…PKTLFVATFI (231 aa)). 37–44 (GPSGCGKT) provides a ligand contact to ATP.

Belongs to the ABC transporter superfamily. Spermidine/putrescine importer (TC 3.A.1.11.1) family. In terms of assembly, the complex is composed of two ATP-binding proteins (PotA), two transmembrane proteins (PotB and PotC) and a solute-binding protein (PotD).

It localises to the cell membrane. It catalyses the reaction ATP + H2O + polyamine-[polyamine-binding protein]Side 1 = ADP + phosphate + polyamineSide 2 + [polyamine-binding protein]Side 1.. Part of the ABC transporter complex PotABCD involved in spermidine/putrescine import. Responsible for energy coupling to the transport system. This Bacillus thuringiensis (strain Al Hakam) protein is Spermidine/putrescine import ATP-binding protein PotA.